A 129-amino-acid chain; its full sequence is Lysozyme C-1 (129 aa).

Positions 1-129 (KVFERCELAR…VSSYVEGCTL (129 aa)) constitute a C-type lysozyme domain. 4 cysteine pairs are disulfide-bonded: Cys-6-Cys-127, Cys-30-Cys-115, Cys-65-Cys-81, and Cys-77-Cys-95. Active-site residues include Glu-35 and Asp-53.

It belongs to the glycosyl hydrolase 22 family. As to quaternary structure, monomer.

The catalysed reaction is Hydrolysis of (1-&gt;4)-beta-linkages between N-acetylmuramic acid and N-acetyl-D-glucosamine residues in a peptidoglycan and between N-acetyl-D-glucosamine residues in chitodextrins.. Lysozymes have primarily a bacteriolytic function; those in tissues and body fluids are associated with the monocyte-macrophage system and enhance the activity of immunoagents. In Capra hircus (Goat), this protein is Lysozyme C-1.